The primary structure comprises 25 residues: Ocellatin-L2 (25 aa).

The residue at position 25 (Leu25) is a Leucine amide.

It belongs to the frog skin active peptide (FSAP) family. Ocellatin subfamily. In terms of tissue distribution, expressed by the skin glands.

It is found in the secreted. Functionally, shows a low activity in stimulating insulin release from rat BRIN-BD11 beta cells, and acts without loss of integrity of the plasma membrane. Does not show antibacterial (E.coli and S.aureus). Does not show hemolytic activity against human erythrocytes. This chain is Ocellatin-L2, found in Leptodactylus laticeps (Santa Fe frog).